Consider the following 274-residue polypeptide: MAAPEAEVLSSAAVPDLEWYEKSEETHASQIELLETSSTQEPLNASEAFCPRDCMVPVVFPGPVSQEGCCQFTCELLKHIMYQRQQLPLPYEQLKHFYRKPSPQAEEMLKKKPRATTEVSSRKCQQALAELESVLSHLEDFFARTLVPRVLILLGGNALSPKEFYELDLSLLAPYSVDQSLSTAACLRRLFRAIFMADAFSELQAPPLMGTVVMAQGHRNCGEDWFRPKLNYRVPSRGHKLTVTLSCGRPSIRTTAWEDYIWFQAPVTFKGFRE.

The segment at 45–78 (ASEAFCPRDCMVPVVFPGPVSQEGCCQFTCELLK) is interaction with MAD2L1. Ser102 is modified (phosphoserine).

This sequence belongs to the MAD2L1BP family. Interacts with MAD2L1.

It localises to the nucleus. The protein localises to the cytoplasm. The protein resides in the cytoskeleton. Its subcellular location is the spindle. Its function is as follows. May function to silence the spindle checkpoint and allow mitosis to proceed through anaphase by binding MAD2L1 after it has become dissociated from the MAD2L1-CDC20 complex. This Homo sapiens (Human) protein is MAD2L1-binding protein (MAD2L1BP).